The chain runs to 144 residues: Protein E6 (144 aa).

Zinc fingers lie at residues 32–68 (CAFCKKTVCTAEIYAFQYKDLFVVWRHGFPHAACALC) and 105–141 (CWLCHKPLCNVEKQRHVDYNRRFHCVRGYWKGRCLHC).

The protein belongs to the papillomaviridae E6 protein family. Forms homodimers. Interacts with ubiquitin-protein ligase UBE3A/E6-AP; this interaction stimulates UBE3A ubiquitin activity. Interacts with host TP53 and EP300; this interaction inhibits TP53 activity.

It is found in the host cytoplasm. Its subcellular location is the host nucleus. Its function is as follows. Plays a major role in the induction and maintenance of cellular transformation. E6 associates with host UBE3A/E6-AP ubiquitin-protein ligase and modulates its activity. Sequesters tumor suppressor TP53 in the host cytoplasm and modulates its activity by interacting with host EP300 that results in the reduction of TP53 acetylation and activation. In turn, apoptosis induced by DNA damage is inhibited. E6 also protects host keratinocytes from apoptosis by mediating the degradation of host BAK1. May also inhibit host immune response. The polypeptide is Protein E6 (Homo sapiens (Human)).